A 90-amino-acid polypeptide reads, in one-letter code: UPF0237 protein MMP0657 (90 aa).

The region spanning 5-79 (VITVVGVDKP…SEIGVKINVQ (75 aa)) is the ACT domain.

This sequence belongs to the UPF0237 family.

In Methanococcus maripaludis (strain DSM 14266 / JCM 13030 / NBRC 101832 / S2 / LL), this protein is UPF0237 protein MMP0657.